We begin with the raw amino-acid sequence, 64 residues long: Large ribosomal subunit protein bL35 (64 aa).

Residues 1–26 (MPKMKSHRGASKRFKRTASGKLKRSH) show a composition bias toward basic residues. The interval 1 to 42 (MPKMKSHRGASKRFKRTASGKLKRSHAYTSHLFANKSTKAKR) is disordered.

This sequence belongs to the bacterial ribosomal protein bL35 family.

This is Large ribosomal subunit protein bL35 from Exiguobacterium sp. (strain ATCC BAA-1283 / AT1b).